A 160-amino-acid chain; its full sequence is Cytochrome b6-f complex subunit 4 (160 aa).

Transmembrane regions (helical) follow at residues 36 to 56 (LLYV…ALAV), 95 to 115 (LLGV…PFIE), and 131 to 151 (TVFL…ALPL).

It belongs to the cytochrome b family. PetD subfamily. The 4 large subunits of the cytochrome b6-f complex are cytochrome b6, subunit IV (17 kDa polypeptide, PetD), cytochrome f and the Rieske protein, while the 4 small subunits are PetG, PetL, PetM and PetN. The complex functions as a dimer.

It localises to the cellular thylakoid membrane. Component of the cytochrome b6-f complex, which mediates electron transfer between photosystem II (PSII) and photosystem I (PSI), cyclic electron flow around PSI, and state transitions. This chain is Cytochrome b6-f complex subunit 4, found in Trichormus variabilis (strain ATCC 29413 / PCC 7937) (Anabaena variabilis).